Consider the following 445-residue polypeptide: 3-phosphoshikimate 1-carboxyvinyltransferase (445 aa).

A disordered region spans residues 1-25 (MTDSNQPMPLQARKSGALHGTARVP). 3-phosphoshikimate-binding residues include lysine 28, serine 29, and arginine 33. Lysine 28 contacts phosphoenolpyruvate. Phosphoenolpyruvate is bound by residues glycine 101 and arginine 129. Residues serine 175, glutamine 177, aspartate 328, and lysine 355 each contribute to the 3-phosphoshikimate site. Position 177 (glutamine 177) interacts with phosphoenolpyruvate. Catalysis depends on aspartate 328, which acts as the Proton acceptor. Phosphoenolpyruvate-binding residues include arginine 359 and arginine 402.

It belongs to the EPSP synthase family. In terms of assembly, monomer.

Its subcellular location is the cytoplasm. It catalyses the reaction 3-phosphoshikimate + phosphoenolpyruvate = 5-O-(1-carboxyvinyl)-3-phosphoshikimate + phosphate. Its pathway is metabolic intermediate biosynthesis; chorismate biosynthesis; chorismate from D-erythrose 4-phosphate and phosphoenolpyruvate: step 6/7. Functionally, catalyzes the transfer of the enolpyruvyl moiety of phosphoenolpyruvate (PEP) to the 5-hydroxyl of shikimate-3-phosphate (S3P) to produce enolpyruvyl shikimate-3-phosphate and inorganic phosphate. This chain is 3-phosphoshikimate 1-carboxyvinyltransferase, found in Rhodopseudomonas palustris (strain ATCC BAA-98 / CGA009).